A 493-amino-acid chain; its full sequence is Monodehydroascorbate reductase, chloroplastic/mitochondrial (493 aa).

The N-terminal 51 residues, 1–51, are a transit peptide targeting the chloroplast and mitochondrion; sequence MSAVRRVMALASTTLPTKSGLSLWCPSSPSLARRFPARFSPIGSRIASRSL. Residues 68-71, Glu-95, Arg-102, Lys-107, and 201-202 contribute to the FAD site; these read GGNA and RE. Residues 224 to 230, Glu-248, Arg-254, and Gly-313 each bind NAD(+); that span reads GGYIGME. Residue 226–230 participates in NADP(+) binding; it reads YIGME. 2 residues coordinate NADP(+): Arg-254 and Gly-313. FAD is bound at residue Asp-351. 367–368 is a binding site for NAD(+); it reads EH. 367–368 provides a ligand contact to NADP(+); that stretch reads EH. Residue Val-369 participates in FAD binding. L-ascorbate is bound at residue Arg-373. FAD is bound at residue Tyr-398. Tyr-398 is a binding site for NAD(+). Position 398 (Tyr-398) interacts with NADP(+). Arg-400 is a binding site for L-ascorbate.

This sequence belongs to the FAD-dependent oxidoreductase family. In terms of assembly, interacts in vitro with TRXy. The cofactor is FAD.

It localises to the plastid. The protein resides in the chloroplast. It is found in the mitochondrion. The catalysed reaction is 2 monodehydro-L-ascorbate radical + NADH + H(+) = 2 L-ascorbate + NAD(+). The enzyme catalyses 2,4,6-trinitrotoluene + NADH = 2,4,6-trinitrotoluene radical + e(-) + NAD(+). Its activity is regulated as follows. Redox regulation of the activity by thioredoxin TRXy1. Its function is as follows. Catalyzes the conversion of monodehydroascorbate (MDA) to ascorbate, oxidizing NADH in the process. Mediates phytotoxicity of 2,4,6-trinitrotoluene (TNT), an explosive and environmental pollutant, by reducing TNT and forming a nitro radical that spontaneously reacts with atmospheric oxygen, generating reactive superoxide. Can also use 1-chloro-2,4-dinitrobenzene (CDNB) as substrate, but not 1-chloro-4-nitrobenzene (CNB). The chain is Monodehydroascorbate reductase, chloroplastic/mitochondrial from Arabidopsis thaliana (Mouse-ear cress).